Reading from the N-terminus, the 225-residue chain is Probable methylthioribulose-1-phosphate dehydratase (225 aa).

Cysteine 86 is a substrate binding site. Residues histidine 104 and histidine 106 each contribute to the Zn(2+) site. Glutamate 127 (proton donor/acceptor) is an active-site residue. Residue histidine 183 participates in Zn(2+) binding.

Belongs to the aldolase class II family. MtnB subfamily. Zn(2+) serves as cofactor.

It localises to the cytoplasm. It catalyses the reaction 5-(methylsulfanyl)-D-ribulose 1-phosphate = 5-methylsulfanyl-2,3-dioxopentyl phosphate + H2O. It participates in amino-acid biosynthesis; L-methionine biosynthesis via salvage pathway; L-methionine from S-methyl-5-thio-alpha-D-ribose 1-phosphate: step 2/6. In terms of biological role, catalyzes the dehydration of methylthioribulose-1-phosphate (MTRu-1-P) into 2,3-diketo-5-methylthiopentyl-1-phosphate (DK-MTP-1-P). The protein is Probable methylthioribulose-1-phosphate dehydratase of Leishmania infantum.